The following is a 331-amino-acid chain: Cysteine and histidine-rich domain-containing protein 1 (331 aa).

Zn(2+) is bound by residues Cys5, Cys10, Cys24, His27, Cys42, Cys43, Cys59, His64, Cys157, Cys162, Cys176, His179, Cys194, Cys195, Cys211, and His216. 2 consecutive CHORD domains span residues 5–64 (CYNR…KGLH) and 157–216 (CKNA…TGTH). Residues 227 to 316 (VVPCRHDWHQ…AEPLLWASLE (90 aa)) enclose the CS domain.

In terms of biological role, regulates centrosome duplication. In Gallus gallus (Chicken), this protein is Cysteine and histidine-rich domain-containing protein 1 (CHORDC1).